Consider the following 551-residue polypeptide: Oleuropein beta-glucosidase (551 aa).

Positions 1–27 are enriched in polar residues; sequence MDIQSNVLTITSGSTPTDTSSNGQAAK. Positions 1–33 are disordered; it reads MDIQSNVLTITSGSTPTDTSSNGQAAKSTKERI. Residues Q52, H156, 201-202, Y363, E433, W482, 489-490, and F498 each bind a beta-D-glucoside; these read NE and EW. The Proton donor role is filled by E202. E433 (nucleophile) is an active-site residue. Residues 502–551 form a required for the homomultimerization region; that stretch reads YVDYANGRYTRLPKRSAVWWRNFLTKPTAVPLKNEPEKSEDRRKRLRGST. Positions 532–551 are disordered; the sequence is PLKNEPEKSEDRRKRLRGST. Basic and acidic residues predominate over residues 535–544; it reads NEPEKSEDRR. The Nuclear localization signal motif lies at 542 to 550; it reads DRRKRLRGS.

This sequence belongs to the glycosyl hydrolase 1 family. As to quaternary structure, homomultimer. Native form of the enzyme requires at least an octamer conformation. Expressed in expanding leaves and in young drupes, mostly in the developing seed coat tissues, the perisperm and the mesocarp. Also detected in shoot and root meristems, flower buds, developing ovaries and tapetal cells of the anther. Not detected in embryos or endosperm, or in leaf trichomes.

It is found in the nucleus. The enzyme catalyses oleuropein + H2O = oleuropein aglycone + D-glucose. Functionally, major beta-glucosidase activating oleuropein into a potent protein cross-linking agent. No activity with rutin, luteolin or p-nitrophenyl-beta-glucopyranoside as substrates. This chain is Oleuropein beta-glucosidase, found in Olea europaea (Common olive).